Consider the following 240-residue polypeptide: Phosphatidylserine decarboxylase proenzyme (240 aa).

Ser-209 acts as the Schiff-base intermediate with substrate; via pyruvic acid in catalysis. Ser-209 carries the post-translational modification Pyruvic acid (Ser); by autocatalysis.

This sequence belongs to the phosphatidylserine decarboxylase family. PSD-A subfamily. Heterodimer of a large membrane-associated beta subunit and a small pyruvoyl-containing alpha subunit. Requires pyruvate as cofactor. Post-translationally, is synthesized initially as an inactive proenzyme. Formation of the active enzyme involves a self-maturation process in which the active site pyruvoyl group is generated from an internal serine residue via an autocatalytic post-translational modification. Two non-identical subunits are generated from the proenzyme in this reaction, and the pyruvate is formed at the N-terminus of the alpha chain, which is derived from the carboxyl end of the proenzyme. The post-translation cleavage follows an unusual pathway, termed non-hydrolytic serinolysis, in which the side chain hydroxyl group of the serine supplies its oxygen atom to form the C-terminus of the beta chain, while the remainder of the serine residue undergoes an oxidative deamination to produce ammonia and the pyruvoyl prosthetic group on the alpha chain.

It localises to the cell membrane. It carries out the reaction a 1,2-diacyl-sn-glycero-3-phospho-L-serine + H(+) = a 1,2-diacyl-sn-glycero-3-phosphoethanolamine + CO2. It functions in the pathway phospholipid metabolism; phosphatidylethanolamine biosynthesis; phosphatidylethanolamine from CDP-diacylglycerol: step 2/2. Catalyzes the formation of phosphatidylethanolamine (PtdEtn) from phosphatidylserine (PtdSer). The polypeptide is Phosphatidylserine decarboxylase proenzyme (Mycobacterium avium (strain 104)).